Here is a 377-residue protein sequence, read N- to C-terminus: DNA-directed RNA polymerase subunit alpha (377 aa).

The tract at residues 1–259 (MSDSSHNLLY…KHFSVFEKMD (259 aa)) is alpha N-terminal domain (alpha-NTD). The tract at residues 279–377 (ILHKLVLGIN…KIRSSKNTKG (99 aa)) is alpha C-terminal domain (alpha-CTD).

This sequence belongs to the RNA polymerase alpha chain family. In terms of assembly, homodimer. The RNAP catalytic core consists of 2 alpha, 1 beta, 1 beta' and 1 omega subunit. When a sigma factor is associated with the core the holoenzyme is formed, which can initiate transcription.

It catalyses the reaction RNA(n) + a ribonucleoside 5'-triphosphate = RNA(n+1) + diphosphate. DNA-dependent RNA polymerase catalyzes the transcription of DNA into RNA using the four ribonucleoside triphosphates as substrates. The polypeptide is DNA-directed RNA polymerase subunit alpha (Chlamydia trachomatis serovar L2 (strain ATCC VR-902B / DSM 19102 / 434/Bu)).